The primary structure comprises 384 residues: Probable UDP-galactopyranose mutase (384 aa).

The first 19 residues, 1 to 19 (MNNKNIMIVGAGFSGVVIA), serve as a signal peptide directing secretion. FAD is bound by residues Ser-14, 33-34 (DR), Asn-41, and 60-61 (HI). UDP-alpha-D-galactose is bound by residues Asn-84, Phe-151, Thr-156, Trp-160, and Tyr-185. An FAD-binding site is contributed by Phe-219. The UDP-alpha-D-galactose site is built by Asn-270, Arg-280, and Tyr-314. Residue Arg-343 coordinates FAD. Position 349 (Tyr-349) interacts with UDP-alpha-D-galactose. Residue 350 to 355 (LDMDVT) coordinates FAD.

It belongs to the UDP-galactopyranose/dTDP-fucopyranose mutase family. Homodimer. Requires FAD as cofactor.

It catalyses the reaction UDP-alpha-D-galactose = UDP-alpha-D-galactofuranose. Its pathway is bacterial outer membrane biogenesis; LPS O-antigen biosynthesis. Functionally, catalyzes the interconversion through a 2-keto intermediate of uridine diphosphogalactopyranose (UDP-GalP) into uridine diphosphogalactofuranose (UDP-GalF). The protein is Probable UDP-galactopyranose mutase (rfbD) of Klebsiella pneumoniae.